Reading from the N-terminus, the 1411-residue chain is Alpha-latroinsectotoxin-Lt1a (1411 aa).

The propeptide occupies 1–35 (ACSSPEVSIFHFFVYAGSFVKNFKKMKGSSAISKR). The interval 245–264 (ALYALFYGTETFISIMFYLV) is helix H8 is the probable transmembrane region of the tetrameric pore inserted in the target cell membrane. ANK repeat units follow at residues 462–495 (DIHRDLYNAAQVPYAREALSISRTLIQNGANVSE), 499–528 (LGRGAIHAAASAGNYDVGELLLNKDINLLE), 533–562 (NGYTPLHIAADSNKNDFVMFLIGNNADVNV), 567–597 (DLFTPLHLAARRDLTDVTQTLIDITEIDLNA), 601–630 (SGFTPLHLSISSTSETAAILIRNTNAVINI), 634–663 (VGLTPLHLATLQNNLSVSKLLAGKGAYLND), 667–697 (NGMTPLHYAAMTGNLEMVDFLLNQQYININA), 702–732 (KKWTPLHLAILFKKNDVAERLLSDENLNIRL), 736–765 (GGINPLHLASATGNKQLVIELLAKNADVTR), 769–798 (KGFSALHLGIIGKNEEIPFFLVEKGANVND), 802–831 (SGVTPLHFAAGLGKANIFRLLLSRGADIKA), 835–864 (NSQMPIHEAVSNGHLEIVRILIEKDPSLMN), 869–898 (RNEYPFYLAVEKRYKDIFDYFVSKDANVNE), 902–931 (NGNTLLHLFSSTGELEVVQFLMQNGANFRL), 935–965 (ERKTFFDLAIENGRLNIVAFAVEKNKVNLQA), 968–999 (RGKTILYHAICDSAKYDKIEIVKYFIEKLNES), 1000–1029 (ECNPLHEAAAYAHLDLVKYFVQERGINPAE), 1080–1109 (QENTPITVAIFANKVSILNYLVGIGADPNQ), 1112–1142 (DGDPPLYIAARQGRFEIVRCLIEVHKVDINT), and 1146–1175 (ERFTALHAAARNDFMDVVKYLVRQGADVNA). The propeptide occupies 1196 to 1411 (QSSRFLRSGH…KVNSNVSQIK (216 aa)). Polar residues predominate over residues 1230–1249 (DKLTQQISSKGTRSDSNSTE). Positions 1230 to 1254 (DKLTQQISSKGTRSDSNSTEGKMHS) are disordered. The stretch at 1331–1361 (NVHSKIYKAIMSGRRSVISEMLCSFAEEYSK) is one ANK 21 repeat.

The protein belongs to the cationic peptide 01 (latrotoxin) family. 02 (alpha-latroinsectotoxin) subfamily. In terms of assembly, homotetramer in membranes. In terms of tissue distribution, expressed by the venom gland.

Its subcellular location is the secreted. It localises to the target cell membrane. Functionally, insecticidal presynaptic neurotoxin that induces massive neurotransmitter release at insect (but not vertebrate) neuromuscular junctions. Native toxin forms cation-permeable pores (with high permeability to calcium) in lipid membranes locust muscle membrane and artificial lipid bilayers. May bind to insect neurexin-1 homolog, insect adhesion G protein-coupled receptor L1 homolog, and insect receptor-type tyrosine-protein phosphatase S homolog, and induces neurotransmitter exocytosis both by forming tetrameric pores in membranes and signaling via G protein-coupled receptor. Oligomerization is a process independent of divalent cations. The toxin forms channels with 0.55-0.58 nm entrance diameter and a relatively small conductance in planar phospholipid membranes. This is Alpha-latroinsectotoxin-Lt1a from Latrodectus tredecimguttatus (Mediterranean black widow spider).